Consider the following 597-residue polypeptide: NADH-quinone oxidoreductase subunit C/D (597 aa).

The segment at 1-188 is NADH dehydrogenase I subunit C; sequence MKKEIKRDDV…DPYVLNKYKE (188 aa). The segment at 211–597 is NADH dehydrogenase I subunit D; the sequence is KYMFLNLGPN…IDFVMSDVDR (387 aa).

In the N-terminal section; belongs to the complex I 30 kDa subunit family. The protein in the C-terminal section; belongs to the complex I 49 kDa subunit family. In terms of assembly, NDH-1 is composed of 13 different subunits. Subunits NuoB, CD, E, F, and G constitute the peripheral sector of the complex.

Its subcellular location is the cell inner membrane. It catalyses the reaction a quinone + NADH + 5 H(+)(in) = a quinol + NAD(+) + 4 H(+)(out). Functionally, NDH-1 shuttles electrons from NADH, via FMN and iron-sulfur (Fe-S) centers, to quinones in the respiratory chain. The immediate electron acceptor for the enzyme in this species is believed to be ubiquinone. Couples the redox reaction to proton translocation (for every two electrons transferred, four hydrogen ions are translocated across the cytoplasmic membrane), and thus conserves the redox energy in a proton gradient. This Buchnera aphidicola subsp. Baizongia pistaciae (strain Bp) protein is NADH-quinone oxidoreductase subunit C/D.